The chain runs to 119 residues: Ribonuclease P protein component (119 aa).

It belongs to the RnpA family. As to quaternary structure, consists of a catalytic RNA component (M1 or rnpB) and a protein subunit.

The enzyme catalyses Endonucleolytic cleavage of RNA, removing 5'-extranucleotides from tRNA precursor.. In terms of biological role, RNaseP catalyzes the removal of the 5'-leader sequence from pre-tRNA to produce the mature 5'-terminus. It can also cleave other RNA substrates such as 4.5S RNA. The protein component plays an auxiliary but essential role in vivo by binding to the 5'-leader sequence and broadening the substrate specificity of the ribozyme. This chain is Ribonuclease P protein component, found in Streptococcus mutans serotype c (strain ATCC 700610 / UA159).